The sequence spans 468 residues: MREYDIVVIGSGPGGQKAAIASAKLGKSVAIVERGRMLGGVCVNTGTIPSKTLREAVLYLTGMNQRELYGASYRVKDRITPADLLARTQHVIGKEVDVVRNQLMRNRVDLIVGHGRFIDPHTILVEDQARREKTTVTGDYIIIATGTRPARPSGVEFDEERVLDSDGILDLKSLPSSMVVVGAGVIGIEYASMFAALGTKVTVVEKRDNMLDFCDPEVVEALKFHLRDLAVTFRFGEEVTAVDVGSAGTVTTLASGKQIPAETVMYSAGRQGQTDHLDLHNAGLEVQGRGRIFVDDRFQTKVDHIYAVGDVIGFPALAATSMEQGRLAAYHAFGEPTDGITELQPIGIYSIPEVSYVGATEVELTKSSIPYEVGVARYRELARGQIAGDSYGMLKLLVSTEDLKLLGVHIFGTSATEMVHIGQAVMGCGGSVEYLVDAVFNYPTFSEAYKNAALDVMNKMRALNQFRR.

Position 33–42 (33–42 (ERGRMLGGVC)) interacts with FAD.

Belongs to the class-I pyridine nucleotide-disulfide oxidoreductase family. The cofactor is FAD.

The protein localises to the cytoplasm. It catalyses the reaction NAD(+) + NADPH = NADH + NADP(+). In terms of biological role, conversion of NADPH, generated by peripheral catabolic pathways, to NADH, which can enter the respiratory chain for energy generation. This is Probable soluble pyridine nucleotide transhydrogenase (sthA) from Mycobacterium bovis (strain ATCC BAA-935 / AF2122/97).